A 284-amino-acid polypeptide reads, in one-letter code: Gigasin-3a (284 aa).

The segment at 202–284 (GLDNPLPNPR…FKAGRKNNRN (83 aa)) is disordered. The segment covering 223–245 (SSPLPESTPKSSTKTSSASPIKS) has biased composition (low complexity). The span at 246–257 (RQGKKLRGKKQN) shows a compositional bias: basic residues. The span at 258–267 (KTGNTRFTYR) shows a compositional bias: polar residues. Positions 268-284 (NNKRNIKFKAGRKNNRN) are enriched in basic residues.

Component of the organic matrix of calcified shell layers.

The chain is Gigasin-3a from Magallana gigas (Pacific oyster).